Here is a 577-residue protein sequence, read N- to C-terminus: 2-succinyl-5-enolpyruvyl-6-hydroxy-3-cyclohexene-1-carboxylate synthase (577 aa).

The protein belongs to the TPP enzyme family. MenD subfamily. In terms of assembly, homodimer. Mg(2+) serves as cofactor. The cofactor is Mn(2+). It depends on thiamine diphosphate as a cofactor.

It carries out the reaction isochorismate + 2-oxoglutarate + H(+) = 5-enolpyruvoyl-6-hydroxy-2-succinyl-cyclohex-3-ene-1-carboxylate + CO2. Its pathway is quinol/quinone metabolism; 1,4-dihydroxy-2-naphthoate biosynthesis; 1,4-dihydroxy-2-naphthoate from chorismate: step 2/7. The protein operates within quinol/quinone metabolism; menaquinone biosynthesis. Catalyzes the thiamine diphosphate-dependent decarboxylation of 2-oxoglutarate and the subsequent addition of the resulting succinic semialdehyde-thiamine pyrophosphate anion to isochorismate to yield 2-succinyl-5-enolpyruvyl-6-hydroxy-3-cyclohexene-1-carboxylate (SEPHCHC). The sequence is that of 2-succinyl-5-enolpyruvyl-6-hydroxy-3-cyclohexene-1-carboxylate synthase from Enterococcus faecalis (strain ATCC 700802 / V583).